The primary structure comprises 202 residues: Endoribonuclease YbeY (202 aa).

Residues histidine 120, histidine 124, and histidine 130 each contribute to the Zn(2+) site.

Belongs to the endoribonuclease YbeY family. The cofactor is Zn(2+).

It localises to the cytoplasm. Its function is as follows. Single strand-specific metallo-endoribonuclease involved in late-stage 70S ribosome quality control and in maturation of the 3' terminus of the 16S rRNA. The polypeptide is Endoribonuclease YbeY (Corynebacterium kroppenstedtii (strain DSM 44385 / JCM 11950 / CIP 105744 / CCUG 35717)).